The chain runs to 315 residues: Glutathione synthetase (315 aa).

Positions 125-310 (KLYTAWFADL…ITGMLMDAIE (186 aa)) constitute an ATP-grasp domain. 151–207 (WEKHGDIIMKPLDGMGGASIFRVKEGDPNIGVIAETLTELGNRYCMAQNYLPAIKDG) serves as a coordination point for ATP. The Mg(2+) site is built by Glu281 and Asn283.

Belongs to the prokaryotic GSH synthase family. The cofactor is Mg(2+). It depends on Mn(2+) as a cofactor.

It carries out the reaction gamma-L-glutamyl-L-cysteine + glycine + ATP = glutathione + ADP + phosphate + H(+). Its pathway is sulfur metabolism; glutathione biosynthesis; glutathione from L-cysteine and L-glutamate: step 2/2. The polypeptide is Glutathione synthetase (Salmonella typhi).